Consider the following 197-residue polypeptide: MVKVGVIGLQGDVSEHIEAAQRALENLGVSGEVIWLKKPEQLEGISAIIIPGGESTTISRLMQKNGLLEPVRKLGEEGLPIMGTCAGLIMLSKEVIGATPEQRFLELLDVKVNRNAYGRQVDSFEAPVKLAFSDEPFPGVFIRAPRIVELLSDKVKPIAWLGDRVVGVEQDNLIGLEFHPELTEDTRVHEYFLRKAL.

Residue 53–55 (GES) coordinates L-glutamine. Residue Cys85 is the Nucleophile of the active site. Residues Arg114 and 142-143 (IR) each bind L-glutamine. Residues His179 and Glu181 each act as charge relay system in the active site.

This sequence belongs to the glutaminase PdxT/SNO family. In terms of assembly, in the presence of PdxS, forms a dodecamer of heterodimers. Only shows activity in the heterodimer.

The enzyme catalyses aldehydo-D-ribose 5-phosphate + D-glyceraldehyde 3-phosphate + L-glutamine = pyridoxal 5'-phosphate + L-glutamate + phosphate + 3 H2O + H(+). The catalysed reaction is L-glutamine + H2O = L-glutamate + NH4(+). It functions in the pathway cofactor biosynthesis; pyridoxal 5'-phosphate biosynthesis. Its function is as follows. Catalyzes the hydrolysis of glutamine to glutamate and ammonia as part of the biosynthesis of pyridoxal 5'-phosphate. The resulting ammonia molecule is channeled to the active site of PdxS. The sequence is that of Pyridoxal 5'-phosphate synthase subunit PdxT from Thermococcus gammatolerans (strain DSM 15229 / JCM 11827 / EJ3).